The following is a 136-amino-acid chain: MTLTVRVITPDKVVWDEEVQELILPSTTGQLGILSNHAPLLTALEIGVMRVRPGKDWQNIAVMGGFAEVENNEVKVLVNGAELGTTIDAESARQAYTAAQGALEEANRGEDKPNQLKASNNYKKARARLQAAGGAV.

The segment at 100-120 (QGALEEANRGEDKPNQLKASN) is disordered. Residues 105–114 (EANRGEDKPN) show a composition bias toward basic and acidic residues.

This sequence belongs to the ATPase epsilon chain family. As to quaternary structure, F-type ATPases have 2 components, CF(1) - the catalytic core - and CF(0) - the membrane proton channel. CF(1) has five subunits: alpha(3), beta(3), gamma(1), delta(1), epsilon(1). CF(0) has three main subunits: a, b and c.

The protein resides in the cellular thylakoid membrane. Its function is as follows. Produces ATP from ADP in the presence of a proton gradient across the membrane. This chain is ATP synthase epsilon chain (atpC), found in Synechocystis sp. (strain ATCC 27184 / PCC 6803 / Kazusa).